We begin with the raw amino-acid sequence, 278 residues long: MGIRKYKPTTPGRRGSSVADFVEVTRSTPEKSLVRPLHSKGGRNNAGRVTVRHQGGGHKRAYRVIDFRRHDKDGVPAKVAHIEYDPNRTARIALLHYADGEKRYILAPRNLQQGDRVENGPGADIKPGNNLALRNIPVGTTIHAIELRPGGGAKFARSAGASVQLLAKEGTMAHLRMPSGEIRLVDQRCRATVGEVGNAEQSNINWGKAGRKRWLGVRPTVRGVVMNPVDHPHGGGEGRTSGGRHPVSPWGKKEGRTRSPKKASNKYIVRRRKTNKKR.

Disordered regions lie at residues 26-57 (RSTP…QGGG) and 225-278 (VMNP…NKKR). A compositionally biased stretch (basic residues) spans 258 to 278 (RSPKKASNKYIVRRRKTNKKR).

The protein belongs to the universal ribosomal protein uL2 family. As to quaternary structure, part of the 50S ribosomal subunit. Forms a bridge to the 30S subunit in the 70S ribosome.

Its function is as follows. One of the primary rRNA binding proteins. Required for association of the 30S and 50S subunits to form the 70S ribosome, for tRNA binding and peptide bond formation. It has been suggested to have peptidyltransferase activity; this is somewhat controversial. Makes several contacts with the 16S rRNA in the 70S ribosome. The protein is Large ribosomal subunit protein uL2 of Streptomyces coelicolor (strain ATCC BAA-471 / A3(2) / M145).